A 243-amino-acid polypeptide reads, in one-letter code: Orotidine 5'-phosphate decarboxylase (243 aa).

Substrate contacts are provided by residues Asp-19, Lys-41, Asp-69 to Thr-78, Thr-124, Arg-185, Gln-194, Gly-214, and Arg-215. Lys-71 functions as the Proton donor in the catalytic mechanism.

Belongs to the OMP decarboxylase family. Type 1 subfamily. Homodimer.

It carries out the reaction orotidine 5'-phosphate + H(+) = UMP + CO2. It participates in pyrimidine metabolism; UMP biosynthesis via de novo pathway; UMP from orotate: step 2/2. Functionally, catalyzes the decarboxylation of orotidine 5'-monophosphate (OMP) to uridine 5'-monophosphate (UMP). The sequence is that of Orotidine 5'-phosphate decarboxylase from Xanthomonas euvesicatoria pv. vesicatoria (strain 85-10) (Xanthomonas campestris pv. vesicatoria).